Reading from the N-terminus, the 145-residue chain is Maximins 3/H11 type 3 (145 aa).

Residues 1-18 (MNFKYIVAVSFLIASAYA) form the signal peptide. 2 consecutive propeptides follow at residues 19-43 (RSVQNDEQSLSQRDVLEEEESLREI) and 75-122 (TAEE…TKKE). Ile-144 is subject to Isoleucine amide.

The protein belongs to the bombinin family. Expressed by the skin glands.

The protein resides in the secreted. Its function is as follows. Maximin-3 shows antibacterial activity against both Gram-positive and Gram-negative bacteria. It also shows antimicrobial activity against the fungus C.albicans, but not against A.flavus nor P.uticale. It has little hemolytic activity. It possess a significant cytotoxicity against tumor cell lines. It possess a significant anti-HIV activity. It shows high spermicidal activity. Maximin-H11 shows antimicrobial activity against bacteria and against the fungus C.albicans. Shows strong hemolytic activity. In Bombina maxima (Giant fire-bellied toad), this protein is Maximins 3/H11 type 3.